We begin with the raw amino-acid sequence, 274 residues long: Proto-oncogene FRAT1 (274 aa).

4 disordered regions span residues 1-24, 55-107, 132-194, and 232-274; these read MPCR…DDSF, AHDR…PGAV, GASA…DDPH, and GPLS…VPGS. Residues 7–23 show a composition bias toward acidic residues; sequence EEEEAGDEAEGEEDDDS. The involved in GSK-3 binding stretch occupies residues 191–214; sequence DDPHRLLQQLVLSGNLIKEAVRRL. A phosphoserine mark is found at serine 243 and serine 246.

It belongs to the GSK-3-binding protein family. In terms of assembly, binds DVL1. Binds GSK-3 and prevent GSK-3-dependent phosphorylation. Phosphorylated. Highly expressed in testis. Lower level of expression in spleen, thymus and brain.

It localises to the cytoplasm. Positively regulates the Wnt signaling pathway by stabilizing beta-catenin through the association with GSK-3. May play a role in tumor progression and collaborate with PIM1 and MYC in lymphomagenesis. The protein is Proto-oncogene FRAT1 (Frat1) of Mus musculus (Mouse).